Reading from the N-terminus, the 289-residue chain is ATP synthase gamma chain (289 aa).

It belongs to the ATPase gamma chain family. In terms of assembly, F-type ATPases have 2 components, CF(1) - the catalytic core - and CF(0) - the membrane proton channel. CF(1) has five subunits: alpha(3), beta(3), gamma(1), delta(1), epsilon(1). CF(0) has three main subunits: a, b and c.

It is found in the cell inner membrane. Its function is as follows. Produces ATP from ADP in the presence of a proton gradient across the membrane. The gamma chain is believed to be important in regulating ATPase activity and the flow of protons through the CF(0) complex. The polypeptide is ATP synthase gamma chain (Acinetobacter baumannii (strain AB307-0294)).